Here is a 65-residue protein sequence, read N- to C-terminus: Alpha-like toxin Bom4 (65 aa).

The LCN-type CS-alpha/beta domain occupies 2–64; that stretch reads RDAYIAQPEN…VPIRIPGKCH (63 aa). 4 disulfides stabilise this stretch: Cys-12/Cys-63, Cys-16/Cys-36, Cys-22/Cys-46, and Cys-26/Cys-48.

This sequence belongs to the long (4 C-C) scorpion toxin superfamily. Sodium channel inhibitor family. Alpha subfamily. In terms of tissue distribution, expressed by the venom gland.

Its subcellular location is the secreted. In terms of biological role, alpha toxins bind voltage-independently at site-3 of sodium channels (Nav) and inhibit the inactivation of the activated channels, thereby blocking neuronal transmission. This alpha-like toxin is highly toxic to mice and insects. In Buthus occitanus mardochei (Moroccan scorpion), this protein is Alpha-like toxin Bom4.